Consider the following 98-residue polypeptide: NADH-ubiquinone oxidoreductase chain 4L (98 aa).

3 helical membrane-spanning segments follow: residues 1-21 (MPLIYMNITLAFTMSLLGMLV), 29-49 (SLLCLEGMMLSLFIMITLMTL), and 58-78 (IMPITMLVFAACEAAVGLALL).

Belongs to the complex I subunit 4L family. Core subunit of respiratory chain NADH dehydrogenase (Complex I) which is composed of 45 different subunits.

The protein resides in the mitochondrion inner membrane. The catalysed reaction is a ubiquinone + NADH + 5 H(+)(in) = a ubiquinol + NAD(+) + 4 H(+)(out). Functionally, core subunit of the mitochondrial membrane respiratory chain NADH dehydrogenase (Complex I) which catalyzes electron transfer from NADH through the respiratory chain, using ubiquinone as an electron acceptor. Part of the enzyme membrane arm which is embedded in the lipid bilayer and involved in proton translocation. In Pongo abelii (Sumatran orangutan), this protein is NADH-ubiquinone oxidoreductase chain 4L (MT-ND4L).